The chain runs to 244 residues: Large ribosomal subunit protein uL30 (244 aa).

Belongs to the universal ribosomal protein uL30 family.

In Candida glabrata (strain ATCC 2001 / BCRC 20586 / JCM 3761 / NBRC 0622 / NRRL Y-65 / CBS 138) (Yeast), this protein is Large ribosomal subunit protein uL30 (RPL7).